Here is a 119-residue protein sequence, read N- to C-terminus: Integration host factor subunit beta (119 aa).

Residues alanine 93 to methionine 119 are disordered. Over residues alanine 97–threonine 112 the composition is skewed to low complexity.

Belongs to the bacterial histone-like protein family. As to quaternary structure, heterodimer of an alpha and a beta chain.

Its function is as follows. This protein is one of the two subunits of integration host factor, a specific DNA-binding protein that functions in genetic recombination as well as in transcriptional and translational control. The protein is Integration host factor subunit beta of Bordetella petrii (strain ATCC BAA-461 / DSM 12804 / CCUG 43448).